A 504-amino-acid polypeptide reads, in one-letter code: ATP synthase subunit beta (504 aa).

The disordered stretch occupies residues 1 to 23 (MAKAATPKETAAAKKPAAPKKAA). ATP is bound at residue 182-189 (GGAGVGKT).

It belongs to the ATPase alpha/beta chains family. In terms of assembly, F-type ATPases have 2 components, CF(1) - the catalytic core - and CF(0) - the membrane proton channel. CF(1) has five subunits: alpha(3), beta(3), gamma(1), delta(1), epsilon(1). CF(0) has three main subunits: a(1), b(2) and c(9-12). The alpha and beta chains form an alternating ring which encloses part of the gamma chain. CF(1) is attached to CF(0) by a central stalk formed by the gamma and epsilon chains, while a peripheral stalk is formed by the delta and b chains.

The protein resides in the cell inner membrane. It carries out the reaction ATP + H2O + 4 H(+)(in) = ADP + phosphate + 5 H(+)(out). Produces ATP from ADP in the presence of a proton gradient across the membrane. The catalytic sites are hosted primarily by the beta subunits. This Rhizobium meliloti (strain 1021) (Ensifer meliloti) protein is ATP synthase subunit beta.